A 96-amino-acid polypeptide reads, in one-letter code: Small ribosomal subunit protein bS6 (96 aa).

Belongs to the bacterial ribosomal protein bS6 family.

In terms of biological role, binds together with bS18 to 16S ribosomal RNA. The chain is Small ribosomal subunit protein bS6 from Streptococcus uberis (strain ATCC BAA-854 / 0140J).